The sequence spans 212 residues: Large ribosomal subunit protein uL3 (212 aa).

A disordered region spans residues 129–156; it reads RRGPMGHGSKNHRAPGSTGAGTTPGRIY. The segment covering 142–153 has biased composition (low complexity); the sequence is APGSTGAGTTPG.

The protein belongs to the universal ribosomal protein uL3 family. Part of the 50S ribosomal subunit. Forms a cluster with proteins L14 and L19.

Functionally, one of the primary rRNA binding proteins, it binds directly near the 3'-end of the 23S rRNA, where it nucleates assembly of the 50S subunit. The protein is Large ribosomal subunit protein uL3 of Acaryochloris marina (strain MBIC 11017).